The sequence spans 425 residues: Oxalate decarboxylase ARB_02208 (425 aa).

A signal peptide spans 1 to 19; that stretch reads MKFGSALVAAVAAVAGVAA. In terms of domain architecture, Cupin type-1 1 spans 73 to 236; the sequence is FSLSKTRMFH…FNISTGGTFD (164 aa). Residues His116, His118, Glu122, and His161 each coordinate Mn(2+). Residues Asn228, Asn247, Asn254, and Asn265 are each glycosylated (N-linked (GlcNAc...) asparagine). The Cupin type-1 2 domain maps to 270–414; sequence FHIRDAPEIQ…AINVPIDVID (145 aa). Mn(2+) is bound by residues His317, His319, Glu324, and His363. The N-linked (GlcNAc...) asparagine glycan is linked to Asn367. Glu378 (proton donor) is an active-site residue.

Mn(2+) is required as a cofactor.

Its subcellular location is the secreted. It catalyses the reaction oxalate + H(+) = formate + CO2. Functionally, converts oxalate to formate and CO(2) in an O(2)-dependent reaction. Can also catalyze minor side reactions: oxalate oxidation to produce H(2)O(2), and oxalate-dependent, H(2)O(2)-independent dye oxidations. This is Oxalate decarboxylase ARB_02208 from Arthroderma benhamiae (strain ATCC MYA-4681 / CBS 112371) (Trichophyton mentagrophytes).